Reading from the N-terminus, the 316-residue chain is tRNA dimethylallyltransferase (316 aa).

ATP is bound at residue 17 to 24 (GPTASGKT). 19–24 (TASGKT) is a substrate binding site. Interaction with substrate tRNA regions lie at residues 42-45 (DSAL), 166-170 (QRLSR), and 247-252 (RCVGYR).

Belongs to the IPP transferase family. As to quaternary structure, monomer. It depends on Mg(2+) as a cofactor.

The enzyme catalyses adenosine(37) in tRNA + dimethylallyl diphosphate = N(6)-dimethylallyladenosine(37) in tRNA + diphosphate. Its function is as follows. Catalyzes the transfer of a dimethylallyl group onto the adenine at position 37 in tRNAs that read codons beginning with uridine, leading to the formation of N6-(dimethylallyl)adenosine (i(6)A). The protein is tRNA dimethylallyltransferase of Salmonella enteritidis PT4 (strain P125109).